Here is a 40-residue protein sequence, read N- to C-terminus: Photosystem II reaction center protein J (40 aa).

Residues isoleucine 8–phenylalanine 28 form a helical membrane-spanning segment.

It belongs to the PsbJ family. As to quaternary structure, PSII is composed of 1 copy each of membrane proteins PsbA, PsbB, PsbC, PsbD, PsbE, PsbF, PsbH, PsbI, PsbJ, PsbK, PsbL, PsbM, PsbT, PsbX, PsbY, PsbZ, Psb30/Ycf12, at least 3 peripheral proteins of the oxygen-evolving complex and a large number of cofactors. It forms dimeric complexes.

The protein localises to the plastid. Its subcellular location is the chloroplast thylakoid membrane. In terms of biological role, one of the components of the core complex of photosystem II (PSII). PSII is a light-driven water:plastoquinone oxidoreductase that uses light energy to abstract electrons from H(2)O, generating O(2) and a proton gradient subsequently used for ATP formation. It consists of a core antenna complex that captures photons, and an electron transfer chain that converts photonic excitation into a charge separation. This Lolium perenne (Perennial ryegrass) protein is Photosystem II reaction center protein J.